We begin with the raw amino-acid sequence, 547 residues long: Chaperonin GroEL (547 aa).

Residues 30 to 33 (TLGP), lysine 51, 87 to 91 (DGTTT), glycine 415, and aspartate 495 each bind ATP.

The protein belongs to the chaperonin (HSP60) family. As to quaternary structure, forms a cylinder of 14 subunits composed of two heptameric rings stacked back-to-back. Interacts with the co-chaperonin GroES.

It is found in the cytoplasm. The catalysed reaction is ATP + H2O + a folded polypeptide = ADP + phosphate + an unfolded polypeptide.. In terms of biological role, together with its co-chaperonin GroES, plays an essential role in assisting protein folding. The GroEL-GroES system forms a nano-cage that allows encapsulation of the non-native substrate proteins and provides a physical environment optimized to promote and accelerate protein folding. This Shewanella halifaxensis (strain HAW-EB4) protein is Chaperonin GroEL.